Reading from the N-terminus, the 398-residue chain is Protein ELC (398 aa).

One can recognise a UEV domain in the interval 18 to 162 (ALSQRGPSSV…ARDPPLYSRR (145 aa)). The segment at 157–202 (PLYSRRRPQPPPPSPPTVYDSSLSRPPSADQSLPRPFPPSPYGGGV) is disordered. The segment covering 175 to 187 (YDSSLSRPPSADQ) has biased composition (polar residues). Positions 247-291 (EAEAEELLSLQAGLKRREDELNIGLKEMVEEKETLEQQLQIISMN) form a coiled coil. The SB domain maps to 322 to 390 (DTLSKQMLEC…RAAQMEVQVA (69 aa)).

It belongs to the ubiquitin-conjugating enzyme family. UEV subfamily. Component of the endosomal sorting required for transport complex I (ESCRT-I), composed of ELC, VPS28 and VPS37. Interacts with VPS28 and VPS37. Binds ubiquitin in vitro. Interacts with FREE1. Interacts with TOL9/TOM1D. Interacts with BRO1/ALIX. Interacts with SINAT1, SINAT2, SINAT3 and SINAT4. Ubiquitinated by SINAT1, SINAT2, SINAT3 and SINAT4 for subsequent proteasomal degradation. Expressed in roots, stems, leaves and flowers.

It localises to the early endosome. The protein resides in the late endosome. The protein localises to the prevacuolar compartment. Its function is as follows. Component of the ESCRT-I complex (endosomal sorting complex required for transport I), a regulator of vesicular trafficking process. Required for the sorting of endocytic ubiquitinated cargos into multivesicular bodies (MVBs). May control nuclear division through the microtubule cytoskeleton. The sequence is that of Protein ELC from Arabidopsis thaliana (Mouse-ear cress).